A 236-amino-acid polypeptide reads, in one-letter code: Large ribosomal subunit protein uL3 (236 aa).

Residues 139-163 (ARDSSTTHEHHRHVGAIGQRKTPGK) form a disordered region.

It belongs to the universal ribosomal protein uL3 family. Part of the 50S ribosomal subunit. Forms a cluster with proteins L14 and L19.

In terms of biological role, one of the primary rRNA binding proteins, it binds directly near the 3'-end of the 23S rRNA, where it nucleates assembly of the 50S subunit. This is Large ribosomal subunit protein uL3 from Anaeromyxobacter sp. (strain Fw109-5).